The sequence spans 281 residues: CCAAT/enhancer-binding protein epsilon (281 aa).

The segment at Met-1–Leu-30 is disordered. Lys-121 is covalently cross-linked (Glycyl lysine isopeptide (Lys-Gly) (interchain with G-Cter in SUMO2)). Ser-181 bears the Phosphoserine mark. The region spanning Ser-204 to Ile-267 is the bZIP domain. The interval Arg-208 to Arg-228 is basic motif. The segment at Leu-230–Leu-237 is leucine-zipper.

Belongs to the bZIP family. C/EBP subfamily. In terms of assembly, binds DNA as a homodimer and as a heterodimer. Can form stable heterodimers with CEBPA, CEBPB and CEBPD. Interacts with GATA1 and SPI1. Interacts with SMARCD2. Post-translationally, phosphorylated. In terms of tissue distribution, strongest expression occurs in promyelocyte and late-myeloblast-like cell lines.

Its subcellular location is the nucleus. Functionally, transcriptional activator. C/EBP are DNA-binding proteins that recognize two different motifs: the CCAAT homology common to many promoters and the enhanced core homology common to many enhancers. Required for the promyelocyte-myelocyte transition in myeloid differentiation. The polypeptide is CCAAT/enhancer-binding protein epsilon (CEBPE) (Homo sapiens (Human)).